Consider the following 361-residue polypeptide: Neuronal-specific septin-3 (361 aa).

The disordered stretch occupies residues 1–46 (MSEIVPPEVRPKPAVPAKPSHVAPPSSAPFVPSPQGTGGEGQGSGR). The segment covering 15 to 34 (VPAKPSHVAPPSSAPFVPSP) has biased composition (low complexity). Residues 36–46 (GTGGEGQGSGR) show a composition bias toward gly residues. The Septin-type G domain occupies 70–342 (AGFDFNIMVV…ETYRAKRLND (273 aa)). The tract at residues 80-87 (GQSGLGKS) is G1 motif. GTP contacts are provided by residues 80 to 87 (GQSGLGKS) and Thr-114. Residues 137-140 (DTPG) form a G3 motif region. Residues 219–222 (AKSD) are G4 motif. GTP contacts are provided by residues 220 to 228 (KSDTLTPEE), Gly-276, and Arg-291. A disordered region spans residues 341–361 (NDNGGLHPISSSGHDTQESNL). The segment covering 349–361 (ISSSGHDTQESNL) has biased composition (polar residues).

This sequence belongs to the TRAFAC class TrmE-Era-EngA-EngB-Septin-like GTPase superfamily. Septin GTPase family.

The protein resides in the cytoplasm. Functionally, may be involved in cytokinesis. The chain is Neuronal-specific septin-3 from Danio rerio (Zebrafish).